The chain runs to 132 residues: Small ribosomal subunit protein uS9 (132 aa).

A disordered region spans residues 103 to 132 (NGLLTRDDRTKERKKPGLKRARKAPQYTKR). The segment covering 114 to 132 (ERKKPGLKRARKAPQYTKR) has biased composition (basic residues).

It belongs to the universal ribosomal protein uS9 family.

The protein is Small ribosomal subunit protein uS9 of Dehalococcoides mccartyi (strain CBDB1).